The sequence spans 606 residues: V-type proton ATPase catalytic subunit A (606 aa).

An N-acetylalanine modification is found at alanine 2. 240–247 is a binding site for ATP; sequence AFGCGKTV.

Belongs to the ATPase alpha/beta chains family. In terms of assembly, V-ATPase is a heteromultimeric enzyme made up of two complexes: the ATP-hydrolytic V1 complex and the proton translocation V0 complex. The V1 complex consists of three catalytic AB heterodimers that form a heterohexamer, three peripheral stalks each consisting of EG heterodimers, one central rotor including subunits D and F, and the regulatory subunits C and H. The proton translocation complex V0 consists of the proton transport subunit a, a ring of proteolipid subunits c9c'', rotary subunit d, subunits e and f, and the accessory subunits vah-19/Ac45 and vah-20/PRR. In terms of tissue distribution, expressed in proximal but not distal germ cells.

It carries out the reaction ATP + H2O + 4 H(+)(in) = ADP + phosphate + 5 H(+)(out). With respect to regulation, ATP hydrolysis occurs at the interface between the nucleotide-binding domains of subunits A and B. ATP hydrolysis triggers a conformational change in the subunits D and F, which induces a shift of subunit d. The c-ring is subsequently rotated and results in a continuous proton translocation across the membrane. Catalytic subunit of the V1 complex of vacuolar(H+)-ATPase (V-ATPase), a multisubunit enzyme composed of a peripheral complex (V1) that hydrolyzes ATP and a membrane integral complex (V0) that translocates protons. V-ATPase is responsible for acidifying and maintaining the pH of intracellular compartments and in some cell types, is targeted to the plasma membrane, where it is responsible for acidifying the extracellular environment. Required along with other vacuolar ATPase components for the removal of protein aggregates which form in immature oocytes in the distal gonad. This removal occurs as the oocytes mature and move to the proximal gonad, is triggered by the introduction of sperm through mating and occurs before fertilization. The introduction of sperm triggers V-ATPase accumulation in proximal oocytes and induces lysosomal acidification which leads to engulfing of protein aggregates by lysosomes and subsequent clearance of the aggregates. Lysosomal acidification also leads to changes in mitochondrial morphology and function. Mitochondria in distal immature oocytes are fragmented, produce high levels of reactive oxygen species (ROS) and have high membrane potential, indicative of metabolic inactivity. In contrast, mitochondria in proximal mature oocytes are tubular with lower ROS levels and membrane potential, indicative of an active metabolic state required for aggregate mobilization before clearance. Involved in receptor-mediated endocytosis. The chain is V-type proton ATPase catalytic subunit A from Caenorhabditis elegans.